The sequence spans 259 residues: Phosphatidylglycerol--prolipoprotein diacylglyceryl transferase (259 aa).

A run of 4 helical transmembrane segments spans residues 12–32 (LAIH…VYLA), 41–61 (ISSD…IVGA), 80–100 (IIAI…GALV), and 109–129 (VLNP…AQAI). Arg131 contacts a 1,2-diacyl-sn-glycero-3-phospho-(1'-sn-glycerol). A run of 3 helical transmembrane segments spans residues 167 to 187 (IPTF…IMMW), 194 to 214 (LLDG…RLVI), and 226 to 246 (GIRI…IFVI).

This sequence belongs to the Lgt family.

The protein resides in the cell membrane. The catalysed reaction is L-cysteinyl-[prolipoprotein] + a 1,2-diacyl-sn-glycero-3-phospho-(1'-sn-glycerol) = an S-1,2-diacyl-sn-glyceryl-L-cysteinyl-[prolipoprotein] + sn-glycerol 1-phosphate + H(+). It functions in the pathway protein modification; lipoprotein biosynthesis (diacylglyceryl transfer). In terms of biological role, catalyzes the transfer of the diacylglyceryl group from phosphatidylglycerol to the sulfhydryl group of the N-terminal cysteine of a prolipoprotein, the first step in the formation of mature lipoproteins. The protein is Phosphatidylglycerol--prolipoprotein diacylglyceryl transferase of Streptococcus pyogenes serotype M49 (strain NZ131).